The following is a 385-amino-acid chain: UPF0764 protein C16orf89 homolog (385 aa).

The first 20 residues, 1–20 (MARLGLLLLLLLALPPHFSS), serve as a signal peptide directing secretion. The tract at residues 344-385 (AHPEYYPNHGDPYSSSQSPASNYQDGAAGPDVQRTGRPLSVS) is disordered. Over residues 356–367 (YSSSQSPASNYQ) the composition is skewed to polar residues.

This sequence belongs to the UPF0764 family. In terms of assembly, homodimer. Post-translationally, glycosylated. Predominantly expressed in thyroid tissue.

Its subcellular location is the secreted. This chain is UPF0764 protein C16orf89 homolog, found in Mus musculus (Mouse).